The chain runs to 52 residues: SDFRNAAVHERQKELVVTATTTCCGYNPMTSCPRCMCDSSCNKKKKPGRRND.

Residues 1–11 (SDFRNAAVHER) constitute a propeptide that is removed on maturation. Gln12 is subject to Pyrrolidone carboxylic acid. Glu14 carries the 4-carboxyglutamate modification. Residues Thr18 and Thr20 are each glycosylated (O-linked (HexNAc...) threonine). A 4-hydroxyproline mark is found at Pro28, Pro33, and Pro47. At Pro47 the chain carries Proline amide. The propeptide occupies 48-52 (GRRND).

Belongs to the conotoxin A superfamily. Contains 3 disulfide bonds. As to expression, expressed by the venom duct.

The protein resides in the secreted. Its function is as follows. Probable neurotoxin with ion channel inhibitor activity. The sequence is that of Conotoxin Ac4.3a from Conus achatinus (Little frog cone).